Consider the following 578-residue polypeptide: Putative multidrug export ATP-binding/permease protein SAB1799c (578 aa).

The Cytoplasmic segment spans residues 1–15; sequence MIKRYLQFVKPYKYR. Residues 16 to 36 form a helical membrane-spanning segment; it reads IFATIIVGIIKFGIPMLIPLL. The ABC transmembrane type-1 domain maps to 16–306; it reads IFATIIVGII…LVASFTTLTQ (291 aa). At 37–59 the chain is on the extracellular side; it reads IKYAIDGVINNHALTTDEKVHHL. Residues 60–80 traverse the membrane as a helical segment; that stretch reads TIAIGIALFIFVIVRPPIEFI. Topologically, residues 81–138 are cytoplasmic; it reads RQYLAQWTSNKILYDIRKKLYNHLQALSARFYANNQVGQVISRVINDVEQTKDFILTG. A helical transmembrane segment spans residues 139 to 159; sequence LMNIWLDCITIIIALSIMFFL. Topologically, residues 160–162 are extracellular; it reads DVK. The helical transmembrane segment at 163 to 183 threads the bilayer; that stretch reads LTLAALFIFPFYILTVYVFFG. The Cytoplasmic portion of the chain corresponds to 184–242; the sequence is RLRKLTRERSQALAEVQGFLHERVQGISVVKSFAIEDNEAKNFDKKNANFLTRALKHTR. The chain crosses the membrane as a helical span at residues 243–262; it reads WNAYSFATINTVTDIGPIIV. Residues 263-267 are Extracellular-facing; that stretch reads IGVGA. A helical membrane pass occupies residues 268–287; it reads YLAISGSITVGTLAAFVGYL. Topologically, residues 288 to 578 are cytoplasmic; the sequence is ELLFGPLRRL…YEHLYSIQNL (291 aa). Residues 340 to 575 enclose the ABC transporter domain; that stretch reads IDIYHVNFQY…QGAYEHLYSI (236 aa). Residue 374 to 381 participates in ATP binding; it reads GMSGGGKS.

Belongs to the ABC transporter superfamily. As to quaternary structure, homodimer.

It is found in the cell membrane. Functionally, may be involved in multidrug export. Transmembrane domains (TMD) form a pore in the cell membrane and the ATP-binding domain (NBD) is responsible for energy generation. In Staphylococcus aureus (strain bovine RF122 / ET3-1), this protein is Putative multidrug export ATP-binding/permease protein SAB1799c.